The sequence spans 307 residues: HTH-type transcriptional regulator DmlR (307 aa).

The HTH lysR-type domain maps to P5–T62. The H-T-H motif DNA-binding region spans F22 to A41.

The protein belongs to the LysR transcriptional regulatory family.

Its function is as follows. Transcriptional regulator required for the aerobic growth on D-malate as the sole carbon source. Induces the expression of dmlA in response to D-malate or L- or meso-tartrate. Negatively regulates its own expression. The protein is HTH-type transcriptional regulator DmlR (dmlR) of Escherichia coli (strain K12).